Consider the following 219-residue polypeptide: Translation initiation factor IF-3 (219 aa).

Belongs to the IF-3 family. In terms of assembly, monomer.

Its subcellular location is the cytoplasm. IF-3 binds to the 30S ribosomal subunit and shifts the equilibrium between 70S ribosomes and their 50S and 30S subunits in favor of the free subunits, thus enhancing the availability of 30S subunits on which protein synthesis initiation begins. The protein is Translation initiation factor IF-3 of Prochlorococcus marinus (strain MIT 9313).